Consider the following 227-residue polypeptide: Ion-translocating oxidoreductase complex subunit E (227 aa).

The next 5 membrane-spanning stretches (helical) occupy residues 34–56 (AINA…TIIS), 68–88 (IPIY…LLHA), 91–111 (FNLY…CIIV), 127–147 (FFDG…VGSI), and 181–201 (TIIL…LIAI).

The protein belongs to the NqrDE/RnfAE family. The complex is composed of six subunits: RnfA, RnfB, RnfC, RnfD, RnfE and RnfG.

It localises to the cell inner membrane. Its function is as follows. Part of a membrane-bound complex that couples electron transfer with translocation of ions across the membrane. The chain is Ion-translocating oxidoreductase complex subunit E from Buchnera aphidicola subsp. Acyrthosiphon pisum (strain 5A).